The chain runs to 146 residues: SsrA-binding protein (146 aa).

Residues 127-139 (KRQTIKDRDNSRE) show a composition bias toward basic and acidic residues. Positions 127-146 (KRQTIKDRDNSREARKHIRV) are disordered.

It belongs to the SmpB family.

Its subcellular location is the cytoplasm. Required for rescue of stalled ribosomes mediated by trans-translation. Binds to transfer-messenger RNA (tmRNA), required for stable association of tmRNA with ribosomes. tmRNA and SmpB together mimic tRNA shape, replacing the anticodon stem-loop with SmpB. tmRNA is encoded by the ssrA gene; the 2 termini fold to resemble tRNA(Ala) and it encodes a 'tag peptide', a short internal open reading frame. During trans-translation Ala-aminoacylated tmRNA acts like a tRNA, entering the A-site of stalled ribosomes, displacing the stalled mRNA. The ribosome then switches to translate the ORF on the tmRNA; the nascent peptide is terminated with the 'tag peptide' encoded by the tmRNA and targeted for degradation. The ribosome is freed to recommence translation, which seems to be the essential function of trans-translation. The protein is SsrA-binding protein of Malacoplasma penetrans (strain HF-2) (Mycoplasma penetrans).